A 321-amino-acid chain; its full sequence is Probable pectate lyase A (321 aa).

The first 18 residues, 1-18, serve as a signal peptide directing secretion; that stretch reads MKFVATLIACGLSGLALA. N-linked (GlcNAc...) asparagine glycosylation is present at asparagine 93. Ca(2+) contacts are provided by aspartate 134, aspartate 163, and aspartate 167. Arginine 220 is an active-site residue. Residue asparagine 238 is glycosylated (N-linked (GlcNAc...) asparagine).

It belongs to the polysaccharide lyase 1 family. The cofactor is Ca(2+).

It is found in the secreted. The enzyme catalyses Eliminative cleavage of (1-&gt;4)-alpha-D-galacturonan to give oligosaccharides with 4-deoxy-alpha-D-galact-4-enuronosyl groups at their non-reducing ends.. Pectinolytic enzyme consist of four classes of enzymes: pectin lyase, polygalacturonase, pectin methylesterase and rhamnogalacturonase. Among pectinolytic enzymes, pectin lyase is the most important in depolymerization of pectin, since it cleaves internal glycosidic bonds of highly methylated pectins. Favors pectate, the anion, over pectin, the methyl ester. The protein is Probable pectate lyase A (plyA) of Aspergillus fumigatus (strain CBS 144.89 / FGSC A1163 / CEA10) (Neosartorya fumigata).